A 44-amino-acid polypeptide reads, in one-letter code: Photosystem I reaction center subunit IX (44 aa).

A helical transmembrane segment spans residues 7 to 27 (YLSVAPVLSTLWFGALAGLLI).

It belongs to the PsaJ family.

Its subcellular location is the plastid. It localises to the chloroplast thylakoid membrane. In terms of biological role, may help in the organization of the PsaE and PsaF subunits. This chain is Photosystem I reaction center subunit IX, found in Eucalyptus globulus subsp. globulus (Tasmanian blue gum).